The primary structure comprises 830 residues: Leucine--tRNA ligase (830 aa).

The 'HIGH' region signature appears at 34-44; that stretch reads PYPSGNIHMGH. The 'KMSKS' region motif lies at 592-596; the sequence is KMSKS. Lys-595 lines the ATP pocket.

It belongs to the class-I aminoacyl-tRNA synthetase family.

It localises to the cytoplasm. It catalyses the reaction tRNA(Leu) + L-leucine + ATP = L-leucyl-tRNA(Leu) + AMP + diphosphate. This chain is Leucine--tRNA ligase, found in Ehrlichia ruminantium (strain Gardel).